The primary structure comprises 208 residues: Probable GTP-binding protein EngB (208 aa).

The 183-residue stretch at 23-205 (LTSEMVVLGR…RQTLLKHLLT (183 aa)) folds into the EngB-type G domain. GTP is bound by residues 31-38 (GRSNVGKS), 57-61 (GKTRL), 84-87 (DLPG), 154-157 (TKFD), and 182-184 (FNA). Positions 38 and 59 each coordinate Mg(2+).

Belongs to the TRAFAC class TrmE-Era-EngA-EngB-Septin-like GTPase superfamily. EngB GTPase family. The cofactor is Mg(2+).

Its function is as follows. Necessary for normal cell division and for the maintenance of normal septation. In Helicobacter pylori (strain ATCC 700392 / 26695) (Campylobacter pylori), this protein is Probable GTP-binding protein EngB.